A 754-amino-acid polypeptide reads, in one-letter code: uncharacterized protein (754 aa).

10 consecutive transmembrane segments (helical) span residues 3–23, 24–44, 50–70, 223–243, 254–274, 320–340, 370–390, 392–412, 446–466, and 471–491; these read ITTV…LPQL, PGTL…FIPV, IALT…ILWA, HLMA…AGLI, WIHW…YAWL, VAIL…LIFW, LLLM…SFIA, LLAI…AMVV, WINI…LLVV, and AWRT…WPLW.

To B.subtilis ComEC, N.gonorrhoeae ComA, and H.influenzae Rec2.

The protein resides in the cell membrane. This is an uncharacterized protein from Escherichia coli (strain K12).